Here is a 152-residue protein sequence, read N- to C-terminus: Endoribonuclease YbeY (152 aa).

H114, H118, and H124 together coordinate Zn(2+).

The protein belongs to the endoribonuclease YbeY family. The cofactor is Zn(2+).

It is found in the cytoplasm. In terms of biological role, single strand-specific metallo-endoribonuclease involved in late-stage 70S ribosome quality control and in maturation of the 3' terminus of the 16S rRNA. This is Endoribonuclease YbeY from Coxiella burnetii (strain CbuK_Q154) (Coxiella burnetii (strain Q154)).